An 875-amino-acid polypeptide reads, in one-letter code: Neurotrypsin (875 aa).

The signal sequence occupies residues 1–20; the sequence is MTLARFVLALMLGALPEVVG. N26 carries an N-linked (GlcNAc...) asparagine glycan. Positions 29-88 are disordered; the sequence is LHHSHRHSPPAGPHYPYYLPTQQRPPRTRPPPPLPRFPRPPRALPAQRPHALQAGHTPRP. Pro residues predominate over residues 56-71; that stretch reads TRPPPPLPRFPRPPRA. Residues 93–165 form the Kringle domain; that stretch reads CPAGEPWVSV…GKVDWGYCDC (73 aa). Cystine bridges form between C93/C165, C109/C149, C138/C163, C195/C259, C208/C269, C239/C249, C305/C369, C318/C379, C349/C359, C412/C475, C425/C485, C455/C465, C525/C589, C538/C599, C569/C579, C619/C750, C661/C677, C765/C831, C794/C808, and C821/C850. SRCR domains follow at residues 170–271, 280–381, 387–487, and 500–601; these read VRLR…TCSF, IRLA…SCTP, IRLA…ACYP, and VRLM…ICDY. Positions 619-630 are zymogen activation region; sequence CGLRLLHRRQKR. The Peptidase S1 domain maps to 631-874; sequence IIGGKNSLRG…FVPWIKSVTK (244 aa). H676 functions as the Charge relay system in the catalytic mechanism. Residue N683 is glycosylated (N-linked (GlcNAc...) asparagine). D726 serves as the catalytic Charge relay system. Catalysis depends on S825, which acts as the Charge relay system.

This sequence belongs to the peptidase S1 family. In terms of tissue distribution, brain and Leydig cells of the testis.

Its subcellular location is the secreted. In terms of biological role, plays a role in neuronal plasticity and the proteolytic action may subserve structural reorganizations associated with learning and memory operations. The chain is Neurotrypsin (PRSS12) from Homo sapiens (Human).